The following is a 176-amino-acid chain: MIMSKETLIKSIREIPDFPIPGILFYDVTTLFKDPWCLQELSNIMFEMYKDKGITKVVGIESRGFIMGPILATRLNAGFIPIRKPGKLPAEVIEESYDKEYGTDTVQIHKDALDENDVVLLHDDLLATGGTMKAACELVKKLKPKKVYVNFIIELKDLNGKSVFGDDVEVESVLTL.

This sequence belongs to the purine/pyrimidine phosphoribosyltransferase family. In terms of assembly, homodimer.

The protein resides in the cytoplasm. The enzyme catalyses AMP + diphosphate = 5-phospho-alpha-D-ribose 1-diphosphate + adenine. It participates in purine metabolism; AMP biosynthesis via salvage pathway; AMP from adenine: step 1/1. Functionally, catalyzes a salvage reaction resulting in the formation of AMP, that is energically less costly than de novo synthesis. The sequence is that of Adenine phosphoribosyltransferase from Bacteroides thetaiotaomicron (strain ATCC 29148 / DSM 2079 / JCM 5827 / CCUG 10774 / NCTC 10582 / VPI-5482 / E50).